Reading from the N-terminus, the 765-residue chain is Glucosamine inositolphosphorylceramide transferase 1 (765 aa).

3 consecutive transmembrane segments (helical) span residues 43-63 (FFASCFGFYAFVAATYAWFVF), 394-414 (VILGYASLAAAISVVILLGFL), and 476-496 (MGKFTLGVIVILGLLLTCVGV). Substrate-binding positions include Asn-553, 577–582 (NSLNNR), 598–600 (DDD), Arg-628, and 683–687 (FNCED). Mn(2+) is bound at residue Asp-600. Cys-685 and Cys-738 are oxidised to a cystine. Asp-687 is an active-site residue.

Belongs to the glycosyltransferase 64 family. Mn(2+) is required as a cofactor. In terms of tissue distribution, specifically and highly expressed in developing embryos and mature seeds. Also detected at low levels in stigma and pollen.

It is found in the membrane. The catalysed reaction is an N-(2R-hydroxy-very-long-chain fatty acyl)-(R)-4-hydroxysphingoid base + a 1,2-diacyl-sn-glycero-3-phospho-(1D-myo-inositol) = a 1D-myo-inositol-1-phospho-N-[(R)-2-hydroxy-very-long-chain fatty acyl]-(R)-4-hydroxysphingoid base + a 1,2-diacyl-sn-glycerol. The protein operates within sphingolipid metabolism. Functionally, glycosyltransferase that mediates the glycosylation of glycosylinositol phosphorylceramides (GIPCs), the major sphingolipids in the plasma membrane; acts as a HexN(Ac)-specific GIPC sugar transferase and accepts glucosamine (GlcN) and N-acetylglucosamine (GlcNAc) as the sugar unit. Responsible for the glycosylation of a subgroup of GIPCs found in seeds and pollen that contain GlcNAc and GlcN (GlcN(Ac)). Maybe involved in the maintenance of cell-cell adhesion. In Arabidopsis thaliana (Mouse-ear cress), this protein is Glucosamine inositolphosphorylceramide transferase 1.